The sequence spans 431 residues: Adenylosuccinate synthetase (431 aa).

Residues 13–19 and 41–43 contribute to the GTP site; these read GDEGKGK and GHT. Asp14 functions as the Proton acceptor in the catalytic mechanism. Residues Asp14 and Gly41 each contribute to the Mg(2+) site. Residues 14–17, 39–42, Thr130, Arg144, Gln225, Thr240, and Arg304 contribute to the IMP site; these read DEGK and NAGH. The Proton donor role is filled by His42. Residue 300–306 coordinates substrate; that stretch reads ATTGRKR. Residues Arg306, 332–334, and 415–417 each bind GTP; these read KLD and STG.

Belongs to the adenylosuccinate synthetase family. Homodimer. Mg(2+) serves as cofactor.

It localises to the cytoplasm. The catalysed reaction is IMP + L-aspartate + GTP = N(6)-(1,2-dicarboxyethyl)-AMP + GDP + phosphate + 2 H(+). The protein operates within purine metabolism; AMP biosynthesis via de novo pathway; AMP from IMP: step 1/2. Plays an important role in the de novo pathway of purine nucleotide biosynthesis. Catalyzes the first committed step in the biosynthesis of AMP from IMP. The polypeptide is Adenylosuccinate synthetase (Shewanella frigidimarina (strain NCIMB 400)).